A 525-amino-acid polypeptide reads, in one-letter code: Zinc finger C2HC domain-containing protein 1C (525 aa).

Residues 23-34 are compositionally biased toward basic and acidic residues; it reads AHGLHSAKHDPY. 3 disordered regions span residues 23 to 48, 85 to 107, and 145 to 171; these read AHGLHSAKHDPYEQSDSPQRSSMGHL, CPHSAGISQQGSGNNAQGQGKGL, and VHRKSHSTSETGIDGDQNGYPRLPDSS. The span at 36–48 shows a compositional bias: polar residues; sequence QSDSPQRSSMGHL. Positions 90–102 are enriched in low complexity; sequence GISQQGSGNNAQG. Positions 207-252 form a coiled coil; sequence TQIQRLEAAGESLQKEIRRKEILLREKLKKTEEGLRRIQREKKQAI. Disordered stretches follow at residues 292-316, 330-349, and 356-379; these read SRNRGEDQTCEQAQENSSPLQLSDY, NNKIRDRDSGPSAGTFSQPA, and LQASSLSGTPGSSGSSSSTEEQEL. Residues 301 to 312 show a composition bias toward polar residues; the sequence is CEQAQENSSPLQ. A compositionally biased stretch (low complexity) spans 359–373; it reads SSLSGTPGSSGSSSS. C2HC/C3H-type zinc fingers lie at residues 378 to 407 and 487 to 516; these read ELGKCSHCGRSFLSLRLQRHSTVCGKMQGS and DYVQCPHCSRHFAPKVAERHIPKCKTIKNR. Zn(2+) contacts are provided by cysteine 382, cysteine 385, histidine 397, cysteine 401, cysteine 491, cysteine 494, histidine 506, and cysteine 510.

The protein belongs to the ZC2HC1 family. Requires Zn(2+) as cofactor.

The polypeptide is Zinc finger C2HC domain-containing protein 1C (Zc2hc1c) (Rattus norvegicus (Rat)).